The following is a 93-amino-acid chain: Small ribosomal subunit protein uS19 (93 aa).

Disordered stretches follow at residues 1 to 25 (MPRS…QNTK) and 74 to 93 (FAPT…ARRR). 2 stretches are compositionally biased toward basic and acidic residues: residues 14–23 (HLQKKVDDQN) and 81–93 (RGHD…ARRR).

It belongs to the universal ribosomal protein uS19 family.

Its function is as follows. Protein S19 forms a complex with S13 that binds strongly to the 16S ribosomal RNA. This is Small ribosomal subunit protein uS19 from Beutenbergia cavernae (strain ATCC BAA-8 / DSM 12333 / CCUG 43141 / JCM 11478 / NBRC 16432 / NCIMB 13614 / HKI 0122).